We begin with the raw amino-acid sequence, 69 residues long: MNQPSLDELLEKVDSRYTLVVVAAKRARELTERGKTKADGAAVMKPVTAALMEIAQNKVGYKRTRSGIK.

The protein belongs to the RNA polymerase subunit omega family. In terms of assembly, the RNAP catalytic core consists of 2 alpha, 1 beta, 1 beta' and 1 omega subunit. When a sigma factor is associated with the core the holoenzyme is formed, which can initiate transcription.

It catalyses the reaction RNA(n) + a ribonucleoside 5'-triphosphate = RNA(n+1) + diphosphate. Functionally, promotes RNA polymerase assembly. Latches the N- and C-terminal regions of the beta' subunit thereby facilitating its interaction with the beta and alpha subunits. The polypeptide is DNA-directed RNA polymerase subunit omega (Pelotomaculum thermopropionicum (strain DSM 13744 / JCM 10971 / SI)).